The chain runs to 121 residues: Large ribosomal subunit protein uL14c (121 aa).

It belongs to the universal ribosomal protein uL14 family. In terms of assembly, part of the 50S ribosomal subunit.

It localises to the plastid. The protein resides in the chloroplast. In terms of biological role, binds to 23S rRNA. This is Large ribosomal subunit protein uL14c from Oedogonium cardiacum (Filamentous green alga).